A 434-amino-acid polypeptide reads, in one-letter code: Histidinol dehydrogenase (434 aa).

NAD(+) is bound by residues tyrosine 130, glutamine 191, and asparagine 214. Substrate contacts are provided by serine 237, glutamine 259, and histidine 262. Zn(2+)-binding residues include glutamine 259 and histidine 262. Residues glutamate 327 and histidine 328 each act as proton acceptor in the active site. Residues histidine 328, aspartate 361, glutamate 415, and histidine 420 each contribute to the substrate site. Position 361 (aspartate 361) interacts with Zn(2+). Position 420 (histidine 420) interacts with Zn(2+).

The protein belongs to the histidinol dehydrogenase family. Zn(2+) serves as cofactor.

The catalysed reaction is L-histidinol + 2 NAD(+) + H2O = L-histidine + 2 NADH + 3 H(+). It participates in amino-acid biosynthesis; L-histidine biosynthesis; L-histidine from 5-phospho-alpha-D-ribose 1-diphosphate: step 9/9. Catalyzes the sequential NAD-dependent oxidations of L-histidinol to L-histidinaldehyde and then to L-histidine. The protein is Histidinol dehydrogenase of Chromobacterium violaceum (strain ATCC 12472 / DSM 30191 / JCM 1249 / CCUG 213 / NBRC 12614 / NCIMB 9131 / NCTC 9757 / MK).